Consider the following 274-residue polypeptide: Fatty-acid O-methyltransferase (274 aa).

This sequence belongs to the methyltransferase superfamily.

It carries out the reaction a fatty acid + S-adenosyl-L-methionine = a fatty acid methyl ester + S-adenosyl-L-homocysteine. Its function is as follows. O-methyltransferase that modifies the hydroxy group of the fatty acids. Oleate is the most effective fatty acid acceptor. In Mycolicibacterium smegmatis (strain ATCC 700084 / mc(2)155) (Mycobacterium smegmatis), this protein is Fatty-acid O-methyltransferase (mtf2).